Reading from the N-terminus, the 151-residue chain is FUN14 domain-containing protein 1 (151 aa).

A YXXL motif is present at residues Y14–L17. A run of 3 helical transmembrane segments spans residues Y44–F64, A71–I91, and F130–A150.

This sequence belongs to the FUN14 family.

The protein resides in the mitochondrion outer membrane. Acts as an activator of hypoxia-induced mitophagy, an important mechanism for mitochondrial quality control. This chain is FUN14 domain-containing protein 1 (fundc1), found in Xenopus tropicalis (Western clawed frog).